Reading from the N-terminus, the 591-residue chain is Thiamine transporter thi9 (591 aa).

Residues 1-22 (MPSSQISHQDPELGQTSSGSSS) show a composition bias toward polar residues. A disordered region spans residues 1 to 42 (MPSSQISHQDPELGQTSSGSSSIKEKAEPQLYAGPIDPARRP). Transmembrane regions (helical) follow at residues 98–118 (LTFS…AMLV), 342–362 (IFYS…LYLF), 397–417 (VVMN…SVLA), 450–470 (ITVI…SAVA), and 545–565 (YAVV…IVIP). Residue S585 is modified to Phosphoserine.

It belongs to the amino acid-polyamine-organocation (APC) superfamily.

It localises to the endoplasmic reticulum membrane. Its subcellular location is the cell membrane. Thiamine transporter involved in the cellular uptake of thiamine. Pyrithiamine, oxythiamine, amprolium, and the thiazole part of thiamine have been shown to be also substrates of thi9. In Schizosaccharomyces pombe (strain 972 / ATCC 24843) (Fission yeast), this protein is Thiamine transporter thi9 (thi9).